A 155-amino-acid polypeptide reads, in one-letter code: Protein SREK1IP1 (155 aa).

The segment at 13 to 30 (AGCKKCGYPGHLTFECRN) adopts a CCHC-type zinc-finger fold. The segment at 43-155 (DVSSTSTEDS…SSSSQSSSSD (113 aa)) is disordered. Residues 58-74 (EVARAPADKKNVTDTGK) show a composition bias toward basic and acidic residues. Residues 75–93 (KKLKRKKEKKLKKHRKRLH) show a composition bias toward basic residues. Positions 94–103 (SSSESDDNSK) are enriched in basic and acidic residues. Residues 104–137 (AKKRKSQKKEKRVKHKAKKGKQHKKDKRKEKRER) show a composition bias toward basic residues. Over residues 140–155 (SSSSSSSSSSQSSSSD) the composition is skewed to low complexity.

Its function is as follows. Possible splicing regulator involved in the control of cellular survival. In Xenopus tropicalis (Western clawed frog), this protein is Protein SREK1IP1 (srek1ip1).